The chain runs to 146 residues: Large ribosomal subunit protein uL15 (146 aa).

Basic and acidic residues predominate over residues 1–13 (MKLHELYPAEGSR). The segment at 1-55 (MKLHELYPAEGSRKVRNRVGRGAATGNGKTSGRGQKGQKARSGGKVRPGFEGGQL) is disordered. Over residues 23–35 (AATGNGKTSGRGQ) the composition is skewed to gly residues.

It belongs to the universal ribosomal protein uL15 family. As to quaternary structure, part of the 50S ribosomal subunit.

Functionally, binds to the 23S rRNA. This Staphylococcus carnosus (strain TM300) protein is Large ribosomal subunit protein uL15.